Here is a 453-residue protein sequence, read N- to C-terminus: Trigger factor (453 aa).

Residues 171–256 (GDRVTVSFKG…ATLVEAPKDT (86 aa)) enclose the PPIase FKBP-type domain.

This sequence belongs to the FKBP-type PPIase family. Tig subfamily.

Its subcellular location is the cytoplasm. The enzyme catalyses [protein]-peptidylproline (omega=180) = [protein]-peptidylproline (omega=0). Its function is as follows. Involved in protein export. Acts as a chaperone by maintaining the newly synthesized protein in an open conformation. Functions as a peptidyl-prolyl cis-trans isomerase. This is Trigger factor from Rhodopseudomonas palustris (strain BisA53).